Consider the following 238-residue polypeptide: Ubiquinone biosynthesis O-methyltransferase (238 aa).

S-adenosyl-L-methionine-binding residues include arginine 38, glycine 58, aspartate 79, and methionine 124.

The protein belongs to the methyltransferase superfamily. UbiG/COQ3 family.

The enzyme catalyses a 3-demethylubiquinol + S-adenosyl-L-methionine = a ubiquinol + S-adenosyl-L-homocysteine + H(+). It catalyses the reaction a 3-(all-trans-polyprenyl)benzene-1,2-diol + S-adenosyl-L-methionine = a 2-methoxy-6-(all-trans-polyprenyl)phenol + S-adenosyl-L-homocysteine + H(+). The protein operates within cofactor biosynthesis; ubiquinone biosynthesis. Its function is as follows. O-methyltransferase that catalyzes the 2 O-methylation steps in the ubiquinone biosynthetic pathway. The sequence is that of Ubiquinone biosynthesis O-methyltransferase from Acinetobacter baylyi (strain ATCC 33305 / BD413 / ADP1).